Here is a 350-residue protein sequence, read N- to C-terminus: RNA 3'-terminal phosphate cyclase (350 aa).

ATP contacts are provided by residues Gln100 and Phe290 to Gln294. Residue His314 is the Tele-AMP-histidine intermediate of the active site.

It belongs to the RNA 3'-terminal cyclase family. Type 1 subfamily.

It localises to the cytoplasm. It carries out the reaction a 3'-end 3'-phospho-ribonucleotide-RNA + ATP = a 3'-end 2',3'-cyclophospho-ribonucleotide-RNA + AMP + diphosphate. Catalyzes the conversion of 3'-phosphate to a 2',3'-cyclic phosphodiester at the end of RNA. The mechanism of action of the enzyme occurs in 3 steps: (A) adenylation of the enzyme by ATP; (B) transfer of adenylate to an RNA-N3'P to produce RNA-N3'PP5'A; (C) and attack of the adjacent 2'-hydroxyl on the 3'-phosphorus in the diester linkage to produce the cyclic end product. The biological role of this enzyme is unknown but it is likely to function in some aspects of cellular RNA processing. This Thermococcus sibiricus (strain DSM 12597 / MM 739) protein is RNA 3'-terminal phosphate cyclase.